Consider the following 230-residue polypeptide: UPF0758 protein Daud_1467 (230 aa).

Residues 108 to 230 enclose the MPN domain; sequence TVRTPEEAAG…FTSLKLEGLF (123 aa). His-179, His-181, and Asp-192 together coordinate Zn(2+). Positions 179–192 match the JAMM motif motif; it reads HNHPSGDPAPSPQD.

Belongs to the UPF0758 family.

The protein is UPF0758 protein Daud_1467 of Desulforudis audaxviator (strain MP104C).